A 315-amino-acid polypeptide reads, in one-letter code: Methionyl-tRNA formyltransferase (315 aa).

113–116 (SLLP) is a binding site for (6S)-5,6,7,8-tetrahydrofolate.

It belongs to the Fmt family.

The enzyme catalyses L-methionyl-tRNA(fMet) + (6R)-10-formyltetrahydrofolate = N-formyl-L-methionyl-tRNA(fMet) + (6S)-5,6,7,8-tetrahydrofolate + H(+). Its function is as follows. Attaches a formyl group to the free amino group of methionyl-tRNA(fMet). The formyl group appears to play a dual role in the initiator identity of N-formylmethionyl-tRNA by promoting its recognition by IF2 and preventing the misappropriation of this tRNA by the elongation apparatus. This is Methionyl-tRNA formyltransferase from Salmonella gallinarum (strain 287/91 / NCTC 13346).